A 328-amino-acid polypeptide reads, in one-letter code: Cytochrome c biogenesis protein CcsA (328 aa).

Helical transmembrane passes span 13–33, 46–66, 73–93, 101–121, 146–166, 234–254, 263–283, and 295–315; these read ISFS…LVNL, GIVI…IYSG, LYES…ISYF, LNAI…SGLL, MILG…LLVI, IISL…VWAN, WDPK…FLHI, and AIVA…VNLL.

This sequence belongs to the CcmF/CycK/Ccl1/NrfE/CcsA family. In terms of assembly, may interact with Ccs1.

The protein resides in the plastid. It is found in the chloroplast thylakoid membrane. Functionally, required during biogenesis of c-type cytochromes (cytochrome c6 and cytochrome f) at the step of heme attachment. This is Cytochrome c biogenesis protein CcsA from Arabis hirsuta (Hairy rock-cress).